The following is a 231-amino-acid chain: Phosphoglycolate phosphatase (231 aa).

D9 acts as the Nucleophile in catalysis. Mg(2+) is bound by residues D9 and D11. D11 acts as the Proton donor in catalysis. K154 contacts substrate. Residues D177 and D181 each coordinate Mg(2+).

This sequence belongs to the archaeal SPP-like hydrolase family. As to quaternary structure, homodimer. Mg(2+) serves as cofactor.

The enzyme catalyses 2-phosphoglycolate + H2O = glycolate + phosphate. Its function is as follows. Catalyzes the dephosphorylation of 2-phosphoglycolate. Has phosphatase activity towards p-nitrophenylphosphate (in vitro). In Pyrococcus horikoshii (strain ATCC 700860 / DSM 12428 / JCM 9974 / NBRC 100139 / OT-3), this protein is Phosphoglycolate phosphatase.